We begin with the raw amino-acid sequence, 716 residues long: Tensin-4 (716 aa).

An N-terminal signal peptide occupies residues 1 to 17 (MSQVMSSPLLAGGPAVG). 4 disordered regions span residues 119–274 (LPPG…VSML), 301–322 (QSSS…NLGP), 334–366 (VPSN…PSIT), and 379–436 (GFPE…RDMQ). The segment covering 138-150 (KKKEEPEALDIKY) has biased composition (basic and acidic residues). The span at 197 to 206 (SSESLIFSGS) shows a compositional bias: polar residues. A compositionally biased stretch (pro residues) spans 214–228 (PAPPSAVPSSHPPTS). Ser248 carries the phosphoserine modification. A compositionally biased stretch (polar residues) spans 265-274 (PQLSSRVSML). Residues 402-419 (ATSSSMPCPATRSHSQTL) are compositionally biased toward polar residues. An SH2 domain is found at 449 to 556 (WFKPSISREQ…ALPCKLVIPQ (108 aa)). The 122-residue stretch at 583–704 (CHALYLSSVS…TLQPASQVIR (122 aa)) folds into the PTB domain.

It belongs to the PTEN phosphatase protein family. As to quaternary structure, interacts (via SH2 domain) with Rho GTPase-activating protein DLC1 (via C-terminus); the interaction is independent of DLC1 tyrosine phosphorylation. Interacts with integrin ITGB1; the interaction displaces tensin TNS3 from the ITGB1 cytoplasmic tail and promotes ITGB1 stability. Interacts (via SH2 domain) with E3 ubiquitin-protein ligase CBL (phosphorylated on 'Tyr-782'); the interaction is enhanced in the presence of EGF and reduces interaction of CBL with EGFR. Interacts (via SH2 domain) with receptor tyrosine kinase MET (when phosphorylated); the interaction increases MET protein stability.

Its subcellular location is the cell junction. The protein localises to the focal adhesion. It is found in the cytoplasm. The protein resides in the cytoskeleton. In terms of biological role, promotes EGF-induced cell migration by displacing tensin TNS3 from the cytoplasmic tail of integrin ITGB1 which results in dissociation of TNS3 from focal adhesions, disassembly of actin stress fibers and initiation of cell migration. Suppresses ligand-induced degradation of EGFR by reducing EGFR ubiquitination in the presence of EGF. Increases MET protein stability by inhibiting MET endocytosis and subsequent lysosomal degradation which leads to increased cell survival, proliferation and migration. The chain is Tensin-4 (TNS4) from Bos taurus (Bovine).